Consider the following 406-residue polypeptide: Endoglucanase 1 (406 aa).

The first 43 residues, 1–43 (MNSKKIGAMIAAAVLSLIVMTPAATRKIVQRQTRNSSTAVENS), serve as a signal peptide directing secretion. Composition is skewed to polar residues over residues 30–41 (QRQTRNSSTAVE) and 51–62 (ENVPVSQTHTND). A disordered region spans residues 30–62 (QRQTRNSSTAVENSAADESETENVPVSQTHTND). The active-site Proton donor is the E210. The active-site Nucleophile is the E330.

This sequence belongs to the glycosyl hydrolase 5 (cellulase A) family.

The catalysed reaction is Endohydrolysis of (1-&gt;4)-beta-D-glucosidic linkages in cellulose, lichenin and cereal beta-D-glucans.. The polypeptide is Endoglucanase 1 (Eg I) (Ruminococcus albus).